The primary structure comprises 356 residues: S-adenosylmethionine:tRNA ribosyltransferase-isomerase (356 aa).

The protein belongs to the QueA family. In terms of assembly, monomer.

It is found in the cytoplasm. The enzyme catalyses 7-aminomethyl-7-carbaguanosine(34) in tRNA + S-adenosyl-L-methionine = epoxyqueuosine(34) in tRNA + adenine + L-methionine + 2 H(+). Its pathway is tRNA modification; tRNA-queuosine biosynthesis. Its function is as follows. Transfers and isomerizes the ribose moiety from AdoMet to the 7-aminomethyl group of 7-deazaguanine (preQ1-tRNA) to give epoxyqueuosine (oQ-tRNA). This chain is S-adenosylmethionine:tRNA ribosyltransferase-isomerase, found in Escherichia coli O1:K1 / APEC.